We begin with the raw amino-acid sequence, 462 residues long: UDP-N-acetylmuramate--L-alanine ligase (462 aa).

An ATP-binding site is contributed by 114–120 (GSHGKTT).

This sequence belongs to the MurCDEF family.

It is found in the cytoplasm. The catalysed reaction is UDP-N-acetyl-alpha-D-muramate + L-alanine + ATP = UDP-N-acetyl-alpha-D-muramoyl-L-alanine + ADP + phosphate + H(+). It participates in cell wall biogenesis; peptidoglycan biosynthesis. Cell wall formation. The protein is UDP-N-acetylmuramate--L-alanine ligase of Brachyspira hyodysenteriae (strain ATCC 49526 / WA1).